The following is a 403-amino-acid chain: DNA polymerase IV (403 aa).

Positions 23-203 (IAHMDCDAFY…KPVNILPGVG (181 aa)) constitute a UmuC domain. The Mg(2+) site is built by Asp-27 and Asp-120. Glu-121 is an active-site residue.

Belongs to the DNA polymerase type-Y family. As to quaternary structure, monomer. Mg(2+) serves as cofactor.

The protein resides in the cytoplasm. The enzyme catalyses DNA(n) + a 2'-deoxyribonucleoside 5'-triphosphate = DNA(n+1) + diphosphate. Functionally, poorly processive, error-prone DNA polymerase involved in untargeted mutagenesis. Copies undamaged DNA at stalled replication forks, which arise in vivo from mismatched or misaligned primer ends. These misaligned primers can be extended by PolIV. Exhibits no 3'-5' exonuclease (proofreading) activity. May be involved in translesional synthesis, in conjunction with the beta clamp from PolIII. This chain is DNA polymerase IV, found in Caulobacter vibrioides (strain ATCC 19089 / CIP 103742 / CB 15) (Caulobacter crescentus).